The following is a 396-amino-acid chain: Ribosomal RNA large subunit methyltransferase I (396 aa).

The PUA domain occupies serine 2–phenylalanine 79.

This sequence belongs to the methyltransferase superfamily. RlmI family.

It localises to the cytoplasm. It carries out the reaction cytidine(1962) in 23S rRNA + S-adenosyl-L-methionine = 5-methylcytidine(1962) in 23S rRNA + S-adenosyl-L-homocysteine + H(+). Its function is as follows. Specifically methylates the cytosine at position 1962 (m5C1962) of 23S rRNA. The chain is Ribosomal RNA large subunit methyltransferase I from Citrobacter koseri (strain ATCC BAA-895 / CDC 4225-83 / SGSC4696).